The chain runs to 447 residues: Alpha-1,3-mannosyl-glycoprotein 2-beta-N-acetylglucosaminyltransferase (447 aa).

At 1–6 (MLKKQS) the chain is on the cytoplasmic side. The helical; Signal-anchor for type II membrane protein transmembrane segment at 7 to 29 (AGLVLWGAILFVAWNALLLLFFW) threads the bilayer. At 30-447 (TRPVPSRLPS…TWDGYDPSWT (418 aa)) the chain is on the lumenal side. Cysteines 115 and 145 form a disulfide. Arginine 117, aspartate 144, histidine 190, and aspartate 212 together coordinate substrate. Aspartate 213 is a binding site for Mn(2+). Residues cysteine 239 and cysteine 305 are joined by a disulfide bond. The Proton acceptor role is filled by aspartate 291. Serine 322 is a substrate binding site.

Belongs to the glycosyltransferase 13 family. Interacts with MGAT4D. Interacts with BRI3. Requires Mn(2+) as cofactor.

The protein localises to the golgi apparatus membrane. Its subcellular location is the cytoplasm. The protein resides in the perinuclear region. It carries out the reaction N(4)-(alpha-D-Man-(1-&gt;3)-[alpha-D-Man-(1-&gt;3)-[alpha-D-Man-(1-&gt;6)]-alpha-D-Man-(1-&gt;6)]-beta-D-Man-(1-&gt;4)-beta-D-GlcNAc-(1-&gt;4)-beta-D-GlcNAc)-L-asparaginyl-[protein] (N-glucan mannose isomer 5A1,2) + UDP-N-acetyl-alpha-D-glucosamine = N(4)-{beta-D-GlcNAc-(1-&gt;2)-alpha-D-Man-(1-&gt;3)-[alpha-D-Man-(1-&gt;3)-[alpha-D-Man-(1-&gt;6)]-alpha-D-Man-(1-&gt;6)]-beta-D-Man-(1-&gt;4)-beta-D-GlcNAc-(1-&gt;4)-beta-D-GlcNAc}-L-asparaginyl-[protein] + UDP + H(+). The protein operates within protein modification; protein glycosylation. Its function is as follows. Initiates complex N-linked carbohydrate formation. Essential for the conversion of high-mannose to hybrid and complex N-glycans. The sequence is that of Alpha-1,3-mannosyl-glycoprotein 2-beta-N-acetylglucosaminyltransferase (MGAT1) from Oryctolagus cuniculus (Rabbit).